The sequence spans 353 residues: Photosystem II protein D1 (353 aa).

Residue T2 is modified to N-acetylthreonine. Residue T2 is modified to Phosphothreonine. A run of 3 helical transmembrane segments spans residues 29–46 (YIGW…TATS), 118–133 (HFLL…EWEL), and 142–156 (WIAV…AATA). H118 contacts chlorophyll a. Pheophytin a is bound at residue Y126. Positions 170 and 189 each coordinate [CaMn4O5] cluster. The chain crosses the membrane as a helical span at residues 197-218 (FHMLGVAGVFGGSLFSAMHGSL). Chlorophyll a is bound at residue H198. Residues H215 and 264–265 (SF) each bind a quinone. H215 contacts Fe cation. H272 serves as a coordination point for Fe cation. A helical transmembrane segment spans residues 274–288 (FLAAWPVIGIWFTAL). [CaMn4O5] cluster is bound by residues H332, E333, D342, and A344. Positions 345-353 (SVEAPSVNG) are excised as a propeptide.

The protein belongs to the reaction center PufL/M/PsbA/D family. PSII is composed of 1 copy each of membrane proteins PsbA, PsbB, PsbC, PsbD, PsbE, PsbF, PsbH, PsbI, PsbJ, PsbK, PsbL, PsbM, PsbT, PsbX, PsbY, PsbZ, Psb30/Ycf12, at least 3 peripheral proteins of the oxygen-evolving complex and a large number of cofactors. It forms dimeric complexes. It depends on The D1/D2 heterodimer binds P680, chlorophylls that are the primary electron donor of PSII, and subsequent electron acceptors. It shares a non-heme iron and each subunit binds pheophytin, quinone, additional chlorophylls, carotenoids and lipids. D1 provides most of the ligands for the Mn4-Ca-O5 cluster of the oxygen-evolving complex (OEC). There is also a Cl(-1) ion associated with D1 and D2, which is required for oxygen evolution. The PSII complex binds additional chlorophylls, carotenoids and specific lipids. as a cofactor. In terms of processing, tyr-161 forms a radical intermediate that is referred to as redox-active TyrZ, YZ or Y-Z. Post-translationally, C-terminally processed by CTPA; processing is essential to allow assembly of the oxygen-evolving complex and thus photosynthetic growth.

The protein localises to the plastid. It is found in the chloroplast thylakoid membrane. The enzyme catalyses 2 a plastoquinone + 4 hnu + 2 H2O = 2 a plastoquinol + O2. Its function is as follows. Photosystem II (PSII) is a light-driven water:plastoquinone oxidoreductase that uses light energy to abstract electrons from H(2)O, generating O(2) and a proton gradient subsequently used for ATP formation. It consists of a core antenna complex that captures photons, and an electron transfer chain that converts photonic excitation into a charge separation. The D1/D2 (PsbA/PsbD) reaction center heterodimer binds P680, the primary electron donor of PSII as well as several subsequent electron acceptors. This chain is Photosystem II protein D1, found in Chlorokybus atmophyticus (Soil alga).